Reading from the N-terminus, the 61-residue chain is Small ribosomal subunit protein uS14 (61 aa).

Residues C24, C27, C40, and C43 each coordinate Zn(2+).

Belongs to the universal ribosomal protein uS14 family. Zinc-binding uS14 subfamily. Part of the 30S ribosomal subunit. Contacts proteins S3 and S10. Zn(2+) serves as cofactor.

In terms of biological role, binds 16S rRNA, required for the assembly of 30S particles and may also be responsible for determining the conformation of the 16S rRNA at the A site. The protein is Small ribosomal subunit protein uS14 of Clostridium novyi (strain NT).